The chain runs to 256 residues: Ubiquinone/menaquinone biosynthesis C-methyltransferase UbiE (256 aa).

S-adenosyl-L-methionine contacts are provided by residues Thr79, Asp100, and 128-129 (DA).

This sequence belongs to the class I-like SAM-binding methyltransferase superfamily. MenG/UbiE family.

It carries out the reaction a 2-demethylmenaquinol + S-adenosyl-L-methionine = a menaquinol + S-adenosyl-L-homocysteine + H(+). The catalysed reaction is a 2-methoxy-6-(all-trans-polyprenyl)benzene-1,4-diol + S-adenosyl-L-methionine = a 5-methoxy-2-methyl-3-(all-trans-polyprenyl)benzene-1,4-diol + S-adenosyl-L-homocysteine + H(+). The protein operates within quinol/quinone metabolism; menaquinone biosynthesis; menaquinol from 1,4-dihydroxy-2-naphthoate: step 2/2. It participates in cofactor biosynthesis; ubiquinone biosynthesis. Its function is as follows. Methyltransferase required for the conversion of demethylmenaquinol (DMKH2) to menaquinol (MKH2) and the conversion of 2-polyprenyl-6-methoxy-1,4-benzoquinol (DDMQH2) to 2-polyprenyl-3-methyl-6-methoxy-1,4-benzoquinol (DMQH2). This Stutzerimonas stutzeri (strain A1501) (Pseudomonas stutzeri) protein is Ubiquinone/menaquinone biosynthesis C-methyltransferase UbiE.